The chain runs to 288 residues: Diaminopimelate epimerase (288 aa).

N14 and N67 together coordinate substrate. The Proton donor role is filled by C76. Substrate is bound by residues 77–78, N166, N199, and 217–218; these read GN and ER. C226 functions as the Proton acceptor in the catalytic mechanism. 227–228 contacts substrate; it reads GT.

The protein belongs to the diaminopimelate epimerase family. Homodimer.

The protein localises to the cytoplasm. It catalyses the reaction (2S,6S)-2,6-diaminopimelate = meso-2,6-diaminopimelate. The protein operates within amino-acid biosynthesis; L-lysine biosynthesis via DAP pathway; DL-2,6-diaminopimelate from LL-2,6-diaminopimelate: step 1/1. Its function is as follows. Catalyzes the stereoinversion of LL-2,6-diaminopimelate (L,L-DAP) to meso-diaminopimelate (meso-DAP), a precursor of L-lysine and an essential component of the bacterial peptidoglycan. The polypeptide is Diaminopimelate epimerase (Bacillus mycoides (strain KBAB4) (Bacillus weihenstephanensis)).